The chain runs to 134 residues: NADH-quinone oxidoreductase subunit A (134 aa).

Helical transmembrane passes span 14 to 34 (FFMFIFFSLGLCFFMLCLSWI), 66 to 86 (FYLIAMFFVVFDVEALYLYAW), and 96 to 116 (IGFSEALMFGISLLLGLFYLV).

The protein belongs to the complex I subunit 3 family. As to quaternary structure, NDH-1 is composed of 13 different subunits. Subunits NuoA, H, J, K, L, M, N constitute the membrane sector of the complex.

The protein resides in the cell membrane. The enzyme catalyses a quinone + NADH + 5 H(+)(in) = a quinol + NAD(+) + 4 H(+)(out). Functionally, NDH-1 shuttles electrons from NADH, via FMN and iron-sulfur (Fe-S) centers, to quinones in the respiratory chain. The immediate electron acceptor for the enzyme in this species is believed to be ubiquinone. Couples the redox reaction to proton translocation (for every two electrons transferred, four hydrogen ions are translocated across the cytoplasmic membrane), and thus conserves the redox energy in a proton gradient. This chain is NADH-quinone oxidoreductase subunit A, found in Buchnera aphidicola subsp. Acyrthosiphon pisum (strain APS) (Acyrthosiphon pisum symbiotic bacterium).